The sequence spans 275 residues: MTRFAPGAPAWFDLGSPDVAASADFYTGLFGWTATVVSDPGAGGYTTFSSDGKLVAAVARHQIDTPYHRPYGPGNDQHGMPAIWTVYFATNDADALTKRVETAGGDVIMTPMDVLGLGRMAVFADPSGAAFAVWRKGVMEGAEVTGVPGSVGWVELVTDDIGTARGFYRATLGLAPADTGRKGVTDPVWHIHDTPVAGTRELGTTGAVRPHWAVLFSVHDCDATVRRAVELGGSVENEPVDTPRGRRADLLDPHGAGFSVVELREAYPAAADGAS.

VOC domains are found at residues 8 to 136 (APAW…VWRK) and 150 to 263 (SVGW…VVEL).

The protein operates within antibiotic biosynthesis; daunorubicin biosynthesis. Its pathway is antibiotic biosynthesis; carminomycin biosynthesis. In terms of biological role, involved in the biosynthesis of the anthracyclines carminomycin and daunorubicin (daunomycin) which are aromatic polyketide antibiotics that exhibit high cytotoxicity and are widely applied in the chemotherapy of a variety of cancers. Acts jointly with DoxA in the conversion of 13-deoxycarminomycin and 13-deoxydaunorubicin to yield carminomycin and daunorubicin, respectively. The sequence is that of Anthracycline biosynthesis protein DauV (dauV) from Streptomyces sp. (strain C5).